A 107-amino-acid polypeptide reads, in one-letter code: Thiosulfate sulfurtransferase GlpE (107 aa).

One can recognise a Rhodanese domain in the interval lysine 19–lysine 107. Cysteine 67 functions as the Cysteine persulfide intermediate in the catalytic mechanism.

The protein belongs to the GlpE family.

It localises to the cytoplasm. It catalyses the reaction thiosulfate + hydrogen cyanide = thiocyanate + sulfite + 2 H(+). The catalysed reaction is thiosulfate + [thioredoxin]-dithiol = [thioredoxin]-disulfide + hydrogen sulfide + sulfite + 2 H(+). Its function is as follows. Transferase that catalyzes the transfer of sulfur from thiosulfate to thiophilic acceptors such as cyanide or dithiols. May function in a CysM-independent thiosulfate assimilation pathway by catalyzing the conversion of thiosulfate to sulfite, which can then be used for L-cysteine biosynthesis. The polypeptide is Thiosulfate sulfurtransferase GlpE (Aliivibrio salmonicida (strain LFI1238) (Vibrio salmonicida (strain LFI1238))).